Reading from the N-terminus, the 198-residue chain is Recombination protein RecR (198 aa).

The C4-type zinc finger occupies 57–72 (CEKCNTFTEAQICEVC). In terms of domain architecture, Toprim spans 80–175 (TLLCVVETPA…AVTRLARGVP (96 aa)).

This sequence belongs to the RecR family.

Its function is as follows. May play a role in DNA repair. It seems to be involved in an RecBC-independent recombinational process of DNA repair. It may act with RecF and RecO. In Burkholderia vietnamiensis (strain G4 / LMG 22486) (Burkholderia cepacia (strain R1808)), this protein is Recombination protein RecR.